The primary structure comprises 122 residues: Large ribosomal subunit protein uL14 (122 aa).

It belongs to the universal ribosomal protein uL14 family. As to quaternary structure, part of the 50S ribosomal subunit. Forms a cluster with proteins L3 and L19. In the 70S ribosome, L14 and L19 interact and together make contacts with the 16S rRNA in bridges B5 and B8.

Binds to 23S rRNA. Forms part of two intersubunit bridges in the 70S ribosome. The polypeptide is Large ribosomal subunit protein uL14 (Acetivibrio thermocellus (strain ATCC 27405 / DSM 1237 / JCM 9322 / NBRC 103400 / NCIMB 10682 / NRRL B-4536 / VPI 7372) (Clostridium thermocellum)).